The chain runs to 164 residues: Ribosome maturation factor RimM (164 aa).

The PRC barrel domain occupies 90–161; that stretch reads EGRYYVADII…EIIIKPVKTW (72 aa).

The protein belongs to the RimM family. Binds ribosomal protein uS19.

Its subcellular location is the cytoplasm. An accessory protein needed during the final step in the assembly of 30S ribosomal subunit, possibly for assembly of the head region. Essential for efficient processing of 16S rRNA. May be needed both before and after RbfA during the maturation of 16S rRNA. It has affinity for free ribosomal 30S subunits but not for 70S ribosomes. This chain is Ribosome maturation factor RimM, found in Clostridium tetani (strain Massachusetts / E88).